The following is a 77-amino-acid chain: uncharacterized protein (77 aa).

This is an uncharacterized protein from Escherichia coli (strain K12).